The sequence spans 188 residues: dCTP deaminase (188 aa).

DCTP-binding positions include 111-116 (KSTYAR), 135-137 (TLE), Q156, Y170, and Q180. E137 functions as the Proton donor/acceptor in the catalytic mechanism.

The protein belongs to the dCTP deaminase family. As to quaternary structure, homotrimer.

The catalysed reaction is dCTP + H2O + H(+) = dUTP + NH4(+). It participates in pyrimidine metabolism; dUMP biosynthesis; dUMP from dCTP (dUTP route): step 1/2. In terms of biological role, catalyzes the deamination of dCTP to dUTP. This chain is dCTP deaminase, found in Pseudomonas fluorescens (strain SBW25).